The chain runs to 370 residues: Dual-specificity RNA methyltransferase RlmN (370 aa).

E93 functions as the Proton acceptor in the catalytic mechanism. The 239-residue stretch at E99–D337 folds into the Radical SAM core domain. The cysteines at positions 106 and 343 are disulfide-linked. Residues C113, C117, and C120 each coordinate [4Fe-4S] cluster. S-adenosyl-L-methionine is bound by residues G167–E168, S199, S221–H223, and N300. C343 functions as the S-methylcysteine intermediate in the catalytic mechanism.

The protein belongs to the radical SAM superfamily. RlmN family. [4Fe-4S] cluster serves as cofactor.

The protein resides in the cytoplasm. The catalysed reaction is adenosine(2503) in 23S rRNA + 2 reduced [2Fe-2S]-[ferredoxin] + 2 S-adenosyl-L-methionine = 2-methyladenosine(2503) in 23S rRNA + 5'-deoxyadenosine + L-methionine + 2 oxidized [2Fe-2S]-[ferredoxin] + S-adenosyl-L-homocysteine. It catalyses the reaction adenosine(37) in tRNA + 2 reduced [2Fe-2S]-[ferredoxin] + 2 S-adenosyl-L-methionine = 2-methyladenosine(37) in tRNA + 5'-deoxyadenosine + L-methionine + 2 oxidized [2Fe-2S]-[ferredoxin] + S-adenosyl-L-homocysteine. In terms of biological role, specifically methylates position 2 of adenine 2503 in 23S rRNA and position 2 of adenine 37 in tRNAs. m2A2503 modification seems to play a crucial role in the proofreading step occurring at the peptidyl transferase center and thus would serve to optimize ribosomal fidelity. The protein is Dual-specificity RNA methyltransferase RlmN of Francisella tularensis subsp. holarctica (strain FTNF002-00 / FTA).